The chain runs to 267 residues: Undecaprenyl-diphosphatase (267 aa).

The next 8 membrane-spanning stretches (helical) occupy residues 1–21 (MTYFEAFFLALLQGFTEFLPI), 39–59 (QGLAFDVAVHVGTLAAVVIYF), 83–103 (SNLAWLIVLATIPAALFGLLF), 111–131 (LRSAWVIAATTIVFGLLLWWV), 149–169 (ALFLGIAQAMAMIPGTSRSGI), 189–209 (FLMSIPIITLAGSYLGLKLAM), 218–238 (LLSTGVIVSFISAYICIHFFL), and 246–266 (MMPFVIYRILLGSSLLVWLAL).

Belongs to the UppP family.

It localises to the cell inner membrane. The catalysed reaction is di-trans,octa-cis-undecaprenyl diphosphate + H2O = di-trans,octa-cis-undecaprenyl phosphate + phosphate + H(+). Catalyzes the dephosphorylation of undecaprenyl diphosphate (UPP). Confers resistance to bacitracin. The polypeptide is Undecaprenyl-diphosphatase (Aliivibrio fischeri (strain MJ11) (Vibrio fischeri)).